Consider the following 144-residue polypeptide: Universal stress protein A homolog 1 (144 aa).

It belongs to the universal stress protein A family. As to quaternary structure, homodimer.

It localises to the cytoplasm. Its function is as follows. Involved in stress response. In Coxiella burnetii (strain RSA 493 / Nine Mile phase I), this protein is Universal stress protein A homolog 1 (uspA1).